We begin with the raw amino-acid sequence, 282 residues long: Globin-related protein glb-13 (282 aa).

The tract at residues 1–46 (MGQENSKCPHQSLAEKRYKVERPKTKKVSSGSATERCLSTQSDEKN) is disordered. The segment covering 13-23 (LAEKRYKVERP) has biased composition (basic and acidic residues). Polar residues predominate over residues 28-41 (VSSGSATERCLSTQ). The Globin domain occupies 100–249 (FLTRRERILL…IISFMRRGFD (150 aa)). Heme b is bound by residues histidine 162 and histidine 194.

Belongs to the globin family.

Its function is as follows. Involved in oxidative stress resistance. The sequence is that of Globin-related protein glb-13 from Caenorhabditis elegans.